Here is a 406-residue protein sequence, read N- to C-terminus: uncharacterized protein (406 aa).

Residue G2 is the site of N-myristoyl glycine; by host attachment. The segment at 291 to 406 (QLESTTEVKP…FQYNKPTYDI (116 aa)) is disordered. Positions 296-310 (TEVKPESTTEVKPES) are enriched in basic and acidic residues. Residues 311-323 (TSEVQPESTTEFQ) show a composition bias toward polar residues. Low complexity-rich tracts occupy residues 324–333 (PESTTVVEPE), 341–351 (ESTTEFQPEST), and 359–369 (TTEPQVESTTE). Positions 370–406 (FQPESSTEPQVESTVEVQAESMNESSYFQYNKPTYDI) are enriched in polar residues.

This is an uncharacterized protein from Acanthamoeba polyphaga (Amoeba).